A 274-amino-acid polypeptide reads, in one-letter code: Sulfur carrier protein FdhD (274 aa).

Cys-121 (cysteine persulfide intermediate) is an active-site residue. A Mo-bis(molybdopterin guanine dinucleotide)-binding site is contributed by 258-263 (FSKPGR).

This sequence belongs to the FdhD family.

Its subcellular location is the cytoplasm. In terms of biological role, required for formate dehydrogenase (FDH) activity. Acts as a sulfur carrier protein that transfers sulfur from IscS to the molybdenum cofactor prior to its insertion into FDH. This is Sulfur carrier protein FdhD from Yersinia pseudotuberculosis serotype IB (strain PB1/+).